Consider the following 88-residue polypeptide: Small ribosomal subunit protein bS20 (88 aa).

Positions methionine 1–arginine 23 are enriched in basic and acidic residues. Disordered regions lie at residues methionine 1–valine 28 and proline 69–lysine 88. Residues asparagine 71–lysine 81 show a composition bias toward basic residues.

This sequence belongs to the bacterial ribosomal protein bS20 family.

In terms of biological role, binds directly to 16S ribosomal RNA. In Dehalococcoides mccartyi (strain ATCC BAA-2266 / KCTC 15142 / 195) (Dehalococcoides ethenogenes (strain 195)), this protein is Small ribosomal subunit protein bS20.